Reading from the N-terminus, the 435-residue chain is NADH-quinone oxidoreductase subunit D (435 aa).

The protein belongs to the complex I 49 kDa subunit family. As to quaternary structure, NDH-1 is composed of 14 different subunits. Subunits NuoB, C, D, E, F, and G constitute the peripheral sector of the complex.

The protein localises to the cell inner membrane. The enzyme catalyses a quinone + NADH + 5 H(+)(in) = a quinol + NAD(+) + 4 H(+)(out). NDH-1 shuttles electrons from NADH, via FMN and iron-sulfur (Fe-S) centers, to quinones in the respiratory chain. The immediate electron acceptor for the enzyme in this species is believed to be ubiquinone. Couples the redox reaction to proton translocation (for every two electrons transferred, four hydrogen ions are translocated across the cytoplasmic membrane), and thus conserves the redox energy in a proton gradient. The polypeptide is NADH-quinone oxidoreductase subunit D (Xanthomonas axonopodis pv. citri (strain 306)).